We begin with the raw amino-acid sequence, 188 residues long: UPF0398 protein ABC2016 (188 aa).

Belongs to the UPF0398 family.

The chain is UPF0398 protein ABC2016 from Shouchella clausii (strain KSM-K16) (Alkalihalobacillus clausii).